The following is a 948-amino-acid chain: RNA polymerase-associated protein RapA (948 aa).

The Helicase ATP-binding domain occupies 164 to 332; it reads EVADRSAPRV…FARLRLLDPN (169 aa). An ATP-binding site is contributed by 177 to 184; it reads DEVGLGKT. Residues 278 to 281 carry the DEAH box motif; it reads DEAH. In terms of domain architecture, Helicase C-terminal spans 473–627; the sequence is RVDWLIDTLK…TCPTGNALQH (155 aa).

It belongs to the SNF2/RAD54 helicase family. RapA subfamily. As to quaternary structure, interacts with the RNAP. Has a higher affinity for the core RNAP than for the holoenzyme. Its ATPase activity is stimulated by binding to RNAP.

Its function is as follows. Transcription regulator that activates transcription by stimulating RNA polymerase (RNAP) recycling in case of stress conditions such as supercoiled DNA or high salt concentrations. Probably acts by releasing the RNAP, when it is trapped or immobilized on tightly supercoiled DNA. Does not activate transcription on linear DNA. Probably not involved in DNA repair. The chain is RNA polymerase-associated protein RapA from Pseudomonas putida (strain ATCC 47054 / DSM 6125 / CFBP 8728 / NCIMB 11950 / KT2440).